The following is a 465-amino-acid chain: Poly(A) polymerase I (465 aa).

Residues Asp-80, Asp-82, and Asp-162 contribute to the active site. Residues 429–465 (SAPPDQKGMLNELDEEPSPRRRTRRPRKRAPRREGTA) are disordered. Over residues 448–459 (RRRTRRPRKRAP) the composition is skewed to basic residues.

This sequence belongs to the tRNA nucleotidyltransferase/poly(A) polymerase family.

It catalyses the reaction RNA(n) + ATP = RNA(n)-3'-adenine ribonucleotide + diphosphate. Functionally, adds poly(A) tail to the 3' end of many RNAs, which usually targets these RNAs for decay. Plays a significant role in the global control of gene expression, through influencing the rate of transcript degradation, and in the general RNA quality control. This Escherichia coli O157:H7 protein is Poly(A) polymerase I.